The following is a 78-amino-acid chain: Large ribosomal subunit protein bL28B (78 aa).

Positions M1–W29 are disordered. The span at H20–W29 shows a compositional bias: basic residues.

This sequence belongs to the bacterial ribosomal protein bL28 family.

The protein is Large ribosomal subunit protein bL28B (rpmB2) of Mycobacterium bovis (strain ATCC BAA-935 / AF2122/97).